Here is a 411-residue protein sequence, read N- to C-terminus: Zinc metalloproteinase/disintegrin (411 aa).

The first 20 residues, 1–20 (MIEVLLVTICLAVFPYQGSS), serve as a signal peptide directing secretion. A propeptide spanning residues 21 to 190 (IILESGNVND…KASQLYLTPE (170 aa)) is cleaved from the precursor. The Peptidase M12B domain maps to 197–395 (RYVKLAIVVD…SKPQCILNAP (199 aa)). D284 serves as a coordination point for Ca(2+). 3 cysteine pairs are disulfide-bonded: C308–C390, C352–C374, and C354–C357. Position 333 (H333) interacts with Zn(2+). E334 is a catalytic residue. Zn(2+) contacts are provided by H337 and H343. 2 residues coordinate Ca(2+): C390 and N393. A propeptide spanning residues 396–411 (LRTDTVSTPVSGNEPL) is cleaved from the precursor.

The protein belongs to the venom metalloproteinase (M12B) family. P-II subfamily. Monomer. It depends on Zn(2+) as a cofactor. Expressed by the venom gland.

Its subcellular location is the secreted. Functionally, snake venom metalloproteinase that impairs hemostasis in the envenomed animal. The sequence is that of Zinc metalloproteinase/disintegrin from Protobothrops mucrosquamatus (Taiwan habu).